Here is a 180-residue protein sequence, read N- to C-terminus: CASP-like protein 5A1 (180 aa).

At 1–36 (MEVSHPAVHPVAVPPVLTEPPARVRMKDYQGMPGTL) the chain is on the cytoplasmic side. The chain crosses the membrane as a helical span at residues 37–57 (GGLALRLGQLGFAVLSFSIMV). Residues 58–67 (STPDFSQVTA) are Extracellular-facing. The helical transmembrane segment at 68-88 (FCYLVAATVLQTLWSSITAVV) threads the bilayer. Residues 89 to 102 (DIYALSVRRSLHHS) are Cytoplasmic-facing. A helical membrane pass occupies residues 103-123 (LLVGLFAVGDGVTSTLTFAAA). Residues 124 to 150 (CATAGITVLIDNDLDECGQNHCGRFEA) lie on the Extracellular side of the membrane. A helical transmembrane segment spans residues 151-171 (AAAMAFLSWIMAAPSFLLAFW). Over 172-180 (SFGNKIVCF) the chain is Cytoplasmic.

Belongs to the Casparian strip membrane proteins (CASP) family. As to quaternary structure, homodimer and heterodimers.

It is found in the cell membrane. The sequence is that of CASP-like protein 5A1 from Pteridium aquilinum subsp. aquilinum (Bracken fern).